The sequence spans 113 residues: Protein INCREASED RESISTANCE TO MYZUS PERSICAE 1 (113 aa).

The FLZ-type zinc finger occupies 56–100; that stretch reads DFLKTCSLCNRSLCHHRDIYMYRGNNAFCSLECREKQIKLDEKKA.

It belongs to the FLZ family. In terms of assembly, interacts with KIN10 and KIN11 via its FLZ-type zinc finger domain. Interacts with KINB3 via its N-terminal part. Interacts with GEBP.

Its subcellular location is the nucleus. It is found in the cytoplasm. In terms of biological role, may act as an adapter to facilitate the interaction of SnRK1 complex with effector proteins, conferring tissue- and stimulus-type specific differences in the SnRK1 regulation pathway. The sequence is that of Protein INCREASED RESISTANCE TO MYZUS PERSICAE 1 from Arabidopsis thaliana (Mouse-ear cress).